The chain runs to 452 residues: 1,3-beta-glucanosyltransferase gel1 (452 aa).

The N-terminal stretch at 1–19 (MKASAVTAALAVGASTVLA) is a signal peptide. Cys-71 and Cys-100 are disulfide-bonded. (1,3-beta-D-glucosyl)n contacts are provided by Tyr-89, Asn-159, Glu-160, Asp-201, and Arg-206. Glu-160 acts as the Proton donor in catalysis. 2 cysteine pairs are disulfide-bonded: Cys-215–Cys-345 and Cys-233–Cys-264. Asn-249 is a glycosylation site (N-linked (GlcNAc...) asparagine). Glu-261 (nucleophile) is an active-site residue. Tyr-292 contributes to the (1,3-beta-D-glucosyl)n binding site. The segment covering 325 to 340 (EKTSNPSGDGNYNKTG) has biased composition (polar residues). A disordered region spans residues 325–419 (EKTSNPSGDG…SGTSTSSKGA (95 aa)). The N-linked (GlcNAc...) asparagine glycan is linked to Asn-337. Residues 393–419 (STATAEPGSGSATGSSSSGTSTSSKGA) show a composition bias toward low complexity. Ala-419 carries GPI-like-anchor amidated alanine lipidation. A propeptide spans 420–452 (AAGLTVPSLTMAPVVVGAVTLLSTVFGAGLVLL) (removed in mature form).

The protein belongs to the glycosyl hydrolase 72 family. In terms of processing, the GPI-like anchor contains a phosphoceramide lipid group.

It is found in the cell membrane. Functionally, splits internally a 1,3-beta-glucan molecule and transfers the newly generated reducing end (the donor) to the non-reducing end of another 1,3-beta-glucan molecule (the acceptor) forming a 1,3-beta linkage, resulting in the elongation of 1,3-beta-glucan chains in the cell wall. Involved in cell wall morphogenesis. The sequence is that of 1,3-beta-glucanosyltransferase gel1 (gel1) from Aspergillus fumigatus (strain ATCC MYA-4609 / CBS 101355 / FGSC A1100 / Af293) (Neosartorya fumigata).